We begin with the raw amino-acid sequence, 43 residues long: Cytin chain A (43 aa).

This sequence belongs to the protease inhibitor I13 (potato type I serine protease inhibitor) family. As to quaternary structure, heterodimer of an A chain and a B chain, linked by a disulfide bond.

Its function is as follows. Inhibitor of chymotrypsin. The protein is Cytin chain A of Theromyzon tessulatum (Duck leech).